Reading from the N-terminus, the 278-residue chain is Digeranylgeranylglyceryl phosphate synthase (278 aa).

The next 7 membrane-spanning stretches (helical) occupy residues 12-32 (LKNCLTASFGAFIGGLIASYF), 34-54 (ISMIDNLILASIVVFLVCGFG), 91-111 (LLVVMGLIISMFNITCFLMAV), 142-162 (VFIFGGIAVGNIDVTIMLFLC), 204-224 (FLLVFAVLLSPLPYLFGFFGI), 226-246 (YLISVIFCDLLFLIGIYNLVM), and 257-277 (SRNIKIVTNLVLIAFLIGSLF).

The protein belongs to the UbiA prenyltransferase family. DGGGP synthase subfamily. Mg(2+) is required as a cofactor.

It localises to the cell membrane. It carries out the reaction sn-3-O-(geranylgeranyl)glycerol 1-phosphate + (2E,6E,10E)-geranylgeranyl diphosphate = 2,3-bis-O-(geranylgeranyl)-sn-glycerol 1-phosphate + diphosphate. Its pathway is membrane lipid metabolism; glycerophospholipid metabolism. Prenyltransferase that catalyzes the transfer of the geranylgeranyl moiety of geranylgeranyl diphosphate (GGPP) to the C2 hydroxyl of (S)-3-O-geranylgeranylglyceryl phosphate (GGGP). This reaction is the second ether-bond-formation step in the biosynthesis of archaeal membrane lipids. The chain is Digeranylgeranylglyceryl phosphate synthase from Methanococcus maripaludis (strain C6 / ATCC BAA-1332).